The following is a 253-amino-acid chain: Triosephosphate isomerase (253 aa).

A substrate-binding site is contributed by 9 to 11 (NWK). The active-site Electrophile is His94. Glu163 (proton acceptor) is an active-site residue. Substrate is bound by residues Gly169, Ser209, and 230-231 (GG).

The protein belongs to the triosephosphate isomerase family. Homodimer.

It is found in the cytoplasm. The enzyme catalyses D-glyceraldehyde 3-phosphate = dihydroxyacetone phosphate. It participates in carbohydrate biosynthesis; gluconeogenesis. It functions in the pathway carbohydrate degradation; glycolysis; D-glyceraldehyde 3-phosphate from glycerone phosphate: step 1/1. Its function is as follows. Involved in the gluconeogenesis. Catalyzes stereospecifically the conversion of dihydroxyacetone phosphate (DHAP) to D-glyceraldehyde-3-phosphate (G3P). The sequence is that of Triosephosphate isomerase from Dehalococcoides mccartyi (strain ATCC BAA-2100 / JCM 16839 / KCTC 5957 / BAV1).